A 156-amino-acid chain; its full sequence is S-ribosylhomocysteine lyase (156 aa).

Residues histidine 56, histidine 60, and cysteine 123 each contribute to the Fe cation site.

Belongs to the LuxS family. As to quaternary structure, homodimer. The cofactor is Fe cation.

It carries out the reaction S-(5-deoxy-D-ribos-5-yl)-L-homocysteine = (S)-4,5-dihydroxypentane-2,3-dione + L-homocysteine. Involved in the synthesis of autoinducer 2 (AI-2) which is secreted by bacteria and is used to communicate both the cell density and the metabolic potential of the environment. The regulation of gene expression in response to changes in cell density is called quorum sensing. Catalyzes the transformation of S-ribosylhomocysteine (RHC) to homocysteine (HC) and 4,5-dihydroxy-2,3-pentadione (DPD). The polypeptide is S-ribosylhomocysteine lyase (Staphylococcus haemolyticus (strain JCSC1435)).